Consider the following 89-residue polypeptide: Small ribosomal subunit protein uS15 (89 aa).

Belongs to the universal ribosomal protein uS15 family. In terms of assembly, part of the 30S ribosomal subunit. Forms a bridge to the 50S subunit in the 70S ribosome, contacting the 23S rRNA.

Functionally, one of the primary rRNA binding proteins, it binds directly to 16S rRNA where it helps nucleate assembly of the platform of the 30S subunit by binding and bridging several RNA helices of the 16S rRNA. In terms of biological role, forms an intersubunit bridge (bridge B4) with the 23S rRNA of the 50S subunit in the ribosome. In Azoarcus sp. (strain BH72), this protein is Small ribosomal subunit protein uS15.